A 551-amino-acid polypeptide reads, in one-letter code: Probable alpha-glucosidase (551 aa).

Asp212 functions as the Nucleophile in the catalytic mechanism. Catalysis depends on Glu272, which acts as the Proton donor.

The protein belongs to the glycosyl hydrolase 13 family.

It carries out the reaction Hydrolysis of terminal, non-reducing (1-&gt;4)-linked alpha-D-glucose residues with release of alpha-D-glucose.. The chain is Probable alpha-glucosidase (aglA) from Rhizobium meliloti (strain 1021) (Ensifer meliloti).